A 329-amino-acid polypeptide reads, in one-letter code: Strigolactones hydrolase CXE15 (329 aa).

Positions 83–85 (HGG) match the Involved in the stabilization of the negatively charged intermediate by the formation of the oxyanion hole motif. (-)-2'-epi-GR24 contacts are provided by glycine 85, glycine 86, serine 169, and serine 170. Residue serine 169 is the Nucleophile of the active site. Catalysis depends on residues glutamate 271 and histidine 302.

This sequence belongs to the 'GDXG' lipolytic enzyme family. As to expression, expressed in axillary buds, leaves, stems, hypocotyls, flowers, siliques, and vasculatures of shoots and roots.

The protein localises to the nucleus. The protein resides in the cytoplasm. It localises to the cytosol. It carries out the reaction (-)-2'-epi-GR24 + H2O = (-)-2'-epi-GR24 ABC-rings + 5-hydroxy-3-methylfuran-2(5H)-one. The catalysed reaction is 5-deoxystrigol + H2O = 5-deoxystrigol ABC-rings + 5-hydroxy-3-methylfuran-2(5H)-one. It catalyses the reaction orobanchol + H2O = orobanchol ABC-rings + 5-hydroxy-3-methylfuran-2(5H)-one. Its function is as follows. Binds to strigolactones (SLs) such as (-)-2'-epi-GR24(4DO), 5-deoxystrigol (5DS) and orobanchol, and catalyzes their hydrolysis; SL are phytohormones controlling shoot branching and communications between plants and microorganisms. Promotes shoot branching by dampening SL-inhibited axillary bud outgrowth. The sequence is that of Strigolactones hydrolase CXE15 from Arabidopsis thaliana (Mouse-ear cress).